Here is a 293-residue protein sequence, read N- to C-terminus: tRNA pseudouridine synthase B (293 aa).

Catalysis depends on Asp39, which acts as the Nucleophile.

This sequence belongs to the pseudouridine synthase TruB family. Type 1 subfamily.

It catalyses the reaction uridine(55) in tRNA = pseudouridine(55) in tRNA. In terms of biological role, responsible for synthesis of pseudouridine from uracil-55 in the psi GC loop of transfer RNAs. This is tRNA pseudouridine synthase B from Streptococcus thermophilus (strain ATCC BAA-250 / LMG 18311).